A 206-amino-acid chain; its full sequence is Ras-related protein Ral-B (206 aa).

GTP is bound at residue 21–29 (GSGGVGKSA). The short motif at 43–51 (YEPTKADSY) is the Effector region element. GTP is bound by residues 68-72 (DTAGQ), 128-131 (NKSD), and 158-160 (SAK). Basic and acidic residues predominate over residues 180-189 (KMSENKDKNG). Positions 180–206 (KMSENKDKNGKKSGKNKKSFKERCCLL) are disordered. Residue Cys203 is modified to Cysteine methyl ester. Residue Cys203 is the site of S-geranylgeranyl cysteine attachment. Positions 204 to 206 (CLL) are cleaved as a propeptide — removed in mature form.

This sequence belongs to the small GTPase superfamily. Ras family. Interacts with EXOC2/Sec5 and EXOC8/Exo84. Interacts (via effector domain) with RALBP1. In terms of processing, prenylation is essential for membrane localization. Post-translationally, the farnesylated form confers resistance to the proapoptotic and anti-anchorage-dependent growth effects of some geranylgeranyltransferase I inhibitors.

The protein localises to the cell membrane. Its subcellular location is the midbody. It carries out the reaction GTP + H2O = GDP + phosphate + H(+). Its activity is regulated as follows. Alternates between an inactive form bound to GDP and an active form bound to GTP. Activated by a guanine nucleotide-exchange factor (GEF) and inactivated by a GTPase-activating protein (GAP). Multifunctional GTPase involved in a variety of cellular processes including gene expression, cell migration, cell proliferation, oncogenic transformation and membrane trafficking. Accomplishes its multiple functions by interacting with distinct downstream effectors. Acts as a GTP sensor for GTP-dependent exocytosis of dense core vesicles. Required both to stabilize the assembly of the exocyst complex and to localize functional exocyst complexes to the leading edge of migrating cells. Required for suppression of apoptosis. In late stages of cytokinesis, upon completion of the bridge formation between dividing cells, mediates exocyst recruitment to the midbody to drive abscission. Involved in ligand-dependent receptor mediated endocytosis of the EGF and insulin receptors. This chain is Ras-related protein Ral-B (RALB), found in Macaca fascicularis (Crab-eating macaque).